The chain runs to 420 residues: CinA-like protein (420 aa).

It belongs to the CinA family.

This Syntrophus aciditrophicus (strain SB) protein is CinA-like protein.